The following is a 340-amino-acid chain: Ferrochelatase (340 aa).

Residues His189 and Glu292 each contribute to the Fe cation site.

It belongs to the ferrochelatase family.

It localises to the cytoplasm. The enzyme catalyses heme b + 2 H(+) = protoporphyrin IX + Fe(2+). The protein operates within porphyrin-containing compound metabolism; protoheme biosynthesis; protoheme from protoporphyrin-IX: step 1/1. Catalyzes the ferrous insertion into protoporphyrin IX. The chain is Ferrochelatase from Pseudomonas aeruginosa (strain UCBPP-PA14).